The sequence spans 349 residues: MVTYKDAGVDIYKEDKVIRALASQIKFERTDAIKPADLKGHYAGAIEFGDYYLVLCTDGVGSKMVVAEMANKFDTVPIDMIAMNVNDAICIGAEPVALVDYMAVEDITEDIASQIGKGLNDGIKESNINLIGGETASLPNMIKGVDLAGTVLAVVKKDEIVSGKEVKSGDLIVGLRSSGIHSNGLSLARKVFFDIANLDVNSKLSHGKTVAEELLTPTKIYVKPVLEMIKQVNVKGLAHITGGGFRKLKRLNKEVCYKIDELPEILPIFKEMQKLGNVADEEMFKTFNMGIGFCVIVEKEDAEKIIEISNHHNIPAFVIGKIEDSVEVNGETKKETVLVEYNNKKMIME.

It belongs to the AIR synthase family.

The protein localises to the cytoplasm. The catalysed reaction is 2-formamido-N(1)-(5-O-phospho-beta-D-ribosyl)acetamidine + ATP = 5-amino-1-(5-phospho-beta-D-ribosyl)imidazole + ADP + phosphate + H(+). Its pathway is purine metabolism; IMP biosynthesis via de novo pathway; 5-amino-1-(5-phospho-D-ribosyl)imidazole from N(2)-formyl-N(1)-(5-phospho-D-ribosyl)glycinamide: step 2/2. The protein is Phosphoribosylformylglycinamidine cyclo-ligase of Methanococcus maripaludis (strain DSM 14266 / JCM 13030 / NBRC 101832 / S2 / LL).